Here is a 1360-residue protein sequence, read N- to C-terminus: MAVSEQSQDVFPWLKSLPVAPEFRPTLAEFQDPIAYILKIEEEASRYGICKILPPLPPPSKKTSISNLNRSLAARAAARVRDGGFGACDYDGGPTFATRQQQIGFCPRKQRPVQRPVWQSGEEYSFGEFEFKAKNFEKNYLKKCGKKSQLSALEIETLYWRATVDKPFSVEYANDMPGSAFIPLSLAAARRRESGGEGGTVGETAWNMRAMSRAEGSLLKFMKEEIPGVTSPMVYVAMMFSWFAWHVEDHDLHSLNYLHMGAGKTWYGVPKDAALAFEEVVRVHGYGEELNPLVTFSTLGEKTTVMSPEVFVKAGIPCCRLVQNPGEFVVTFPGAYHSGFSHGFNFGEASNIATPEWLRMAKDAAIRRAAINYPPMVSHLQLLYDFVLALGSRVPTSINPKPRSSRLKDKARSEGERLTKKLFVQNIIHNNELLSSLGKGSPVALLPQSSSDISVCSDLRIGSHLITNQENPIQLKCEDLSSDSVVVDLSNGLKDTVSVKEKFTSLCERSRNHLASTEKDTQETLSDAERRKNDAAVALSDQRLFSCVTCGVLSFDCVAIVQPKEAAARYLMSADCSFFNDWTAASGSANLGQAARSLHPQSKEKHDVNYFYNVPVQTMDHSVKTGDQKTSTTSPTIAHKDNDVLGMLASAYGDSSDSEEEDQKGLVTPSSKGETKTYDQEGSDGHEEARDGRTSDFNCQRLTSEQNGLSKGGKSSLLEIALPFIPRSDDDSCRLHVFCLEHAAEVEQQLRPFGGINLMLLCHPEYPRIEAEAKIVAEELVINHEWNDTEFRNVTREDEETIQAALDNVEAKGGNSDWTVKLGVNLSYSAILSRSPLYSKQMPYNSIIYKAFGRSSPVASSPSKPKVSGKRSSRQRKYVVGKWCGKVWMSHQVHPFLLEQDLEGEESERSCHLRVAMDEDATGKRSFPNNVSRDSTTMFGRKYCRKRKIRAKAVPRKKLTSFKREDGVSDDTSEDHSYKQQWRASGNEEESYFETGNTASGDSSNQMSDPHKGIIRHKGYKEFESDDEVSDRSLGEEYTVRACAASESSMENGSQHSMYDHDDDDDDIDRQPRGIPRSQQTRVFRNPVSYESEDNGVYQQSGRISISNRQANRMVGEYDSAENSLEERGFCSTGKRQTRSTAKRIAKTKTVQSSRDTKGRFLQEFASGKKNEELDSYMEGPSTRLRVRHQKPSRGSLETKPKKIGKKRSGNASFSRVATEKDVEEKEEEEEEEENEEEECAAYQCNMEGCTMSFSSEKQLMLHKRNICPIKGCGKNFFSHKYLVQHQRVHSDDRPLKCPWKGCKMTFKWAWSRTEHIRVHTGARPYVCAEPDCGQTFRFVSDFSRHKRKTGHSVKKTNKR.

Ala2 carries the post-translational modification N-acetylalanine. One can recognise a JmjN domain in the interval 20–61 (APEFRPTLAEFQDPIAYILKIEEEASRYGICKILPPLPPPSK). One can recognise a JmjC domain in the interval 203–369 (ETAWNMRAMS…MAKDAAIRRA (167 aa)). Fe cation contacts are provided by His246, Glu248, and His337. The segment at 652-698 (YGDSSDSEEEDQKGLVTPSSKGETKTYDQEGSDGHEEARDGRTSDFN) is disordered. The segment covering 673-694 (GETKTYDQEGSDGHEEARDGRT) has biased composition (basic and acidic residues). The Nuclear localization signal motif lies at 944–951 (CRKRKIRA). Disordered regions lie at residues 955–1012 (PRKK…DPHK), 1044–1081 (AASE…SQQT), 1133–1155 (TGKR…QSSR), and 1172–1238 (EELD…NEEE). Polar residues-rich tracts occupy residues 994–1008 (ETGN…NQMS) and 1046–1057 (SESSMENGSQHS). Basic residues predominate over residues 1136–1147 (RQTRSTAKRIAK). Acidic residues predominate over residues 1225 to 1238 (EKEEEEEEEENEEE). The segment at 1243-1266 (YQCNMEGCTMSFSSEKQLMLHKRN) adopts a C2H2-type 1; degenerate zinc-finger fold. The Zn(2+) site is built by Cys1245, Cys1250, His1263, Cys1268, Cys1273, His1280, His1286, His1290, Cys1298, Cys1303, His1316, His1320, Cys1328, Cys1333, His1346, and His1352. 3 consecutive C2H2-type zinc fingers follow at residues 1266-1290 (NICP…QRVH), 1296-1320 (LKCP…IRVH), and 1326-1352 (YVCA…KTGH). Residues 1275–1348 (KNFFSHKYLV…FVSDFSRHKR (74 aa)) are DNA-binding.

It belongs to the JHDM3 histone demethylase family. As to quaternary structure, forms homooligomers. Interacts with BZR2 (via N-terminus). Interacts with BRM in the SWI/SNF complex. Interacts (via N-terminus) with NFYC9. Associates with INO80. In terms of tissue distribution, highly expressed in the shoot apical meristem and primary and secondary root tips, and lower expression in cotyledons, leaves and root axis along vascular tissues. Detected in inflorescences, stems and siliques. Present in seeds.

The protein localises to the nucleus. The enzyme catalyses N(6),N(6),N(6)-trimethyl-L-lysyl(27)-[histone H3] + 2-oxoglutarate + O2 = N(6),N(6)-dimethyl-L-lysyl(27)-[histone H3] + formaldehyde + succinate + CO2. It catalyses the reaction N(6),N(6)-dimethyl-L-lysyl(27)-[histone H3] + 2-oxoglutarate + O2 = N(6)-methyl-L-lysyl(27)-[histone H3] + formaldehyde + succinate + CO2. In terms of biological role, histone demethylase that demethylates 'Lys-27' (H3K27me) of histone H3, thus acting as a positive regulator of gene expression. Demethylates both tri- (H3K27me3) and di-methylated (H3K27me2) H3K27me. Also demethylates H3K4me3/2 and H3K36me3/2 in an in vitro assay. Involved in the transcriptional regulation of hundreds of genes regulating developmental patterning and responses to various stimuli. Binds DNA via its four zinc fingers in a sequence-specific manner, 5'-CTCTG(C/T)T(C/T)-3' (5'-CTCTGYTY-3'), with a preference for hypo-methylated status (e.g. cytosine methylation), to promote the demethylation of H3K27me3 and recruit the chromatin remodeler BRM in order to activate gene expression. Participates in the regulation of organ boundary formation. Bind mostly motifs located in active chromatin states which are depleted for heterochromatic modifications. Involved in the regulation of flowering time by repressing FLOWERING LOCUS C (FLC) expression. Stimulates lateral roots formation (e.g. primordium initiation and emergence) via the epigenetic de-repression of PIN genes such as PIN1, PIN3 and PIN7 directly by modulating the methylation status of their loci. Interacts with the NF-Y complex to regulate SOC1. Mediates the recruitment of BRM to its target loci. Together with EEN, involved in the epigenetic chromatin-dependent regulatory mechanism that monitors the expression of the essential multifunctional plant stress regulator EIN2 via H3K27me3 repressive histone demethylation and histone variant H2A.Z eviction, thus modulating responses to ethylene (ET), especially during embryogenesis. Eluviates seed dormancy by triggering abscisic acid (ABA) catabolism in seeds via the induction of CYP707A1 and CYP707A3 expression, genes involved in ABA degradation; binds directly to CYP707A1 and CYP707A3 loci to reduce their H3K27me3 levels in developing siliques. Required for systemic acquired resistance (SAR) toward pathogenic bacteria (e.g. Pseudomonas syringae pv tomato DC3000 (avrPto)). Together with FLD and MSI4/FVE, contributes to dehydroabietinal-dependent (DA, a diterpenoid tricyclic diterpene) activation of flowering ans SAR. Binds to the HSFA2 chromatin region to alleviate H3K27me3 repressive marks and trigger its expression in response to heat in a BRM-dependent manner. Involved in the mechanisms necessary for quick response to heat and subsequent heritable transgenerational memory of heat acclimation (global warming) such as early flowering and attenuated immunity; this process includes epigenetic regulation as well as post-transcriptional gene silencing (PTGS). In response to heat, HSFA2 is activated and promotes the expression of REF6 which in turn derepresses HSFA2, thus establishing a heritable feedback loop able to trigger SGIP1 and subsequent SGIP1-mediated SGS3 degradation; this prevents the biosynthesis of trans-acting siRNA (tasiRNA) and leads to the release of HTT5, which drives early flowering but attenuates immunity. Its function is as follows. Involved in the maintenance of H3K27me1 histone marks on euchromatin in a PRC2-dependent manner, to maintain low-level basal expression of corresponding genes. Together with ELF6, required for H3K27me3 resetting (especially in constitutive heterochromatin within the pericentromeric regions) and transgenerational inheritance of histone marks, thus acting in safeguarding genome and epigenome integrity during sexual reproduction. The chain is Lysine-specific demethylase REF6 from Arabidopsis thaliana (Mouse-ear cress).